The sequence spans 416 residues: UBX domain-containing protein 4 (416 aa).

A UBX domain is found at lysine 273–phenylalanine 350. The segment at threonine 376–lysine 402 is disordered. The span at threonine 378–lysine 402 shows a compositional bias: polar residues.

The protein localises to the nucleus. It localises to the cytoplasm. Involved in CDC48-dependent protein degradation through the ubiquitin/proteasome pathway. This chain is UBX domain-containing protein 4 (UBX4), found in Saccharomyces cerevisiae (strain ATCC 204508 / S288c) (Baker's yeast).